Reading from the N-terminus, the 1304-residue chain is Myosin-1 (1304 aa).

Basic residues predominate over residues 1–12 (MAIVKRGVRTKN). The tract at residues 1–24 (MAIVKRGVRTKNKQSQQPSKSGIK) is disordered. One can recognise a Myosin motor domain in the interval 36 to 730 (VGVSDLTLLS…TLFALEDMRD (695 aa)). ATP is bound at residue 129-136 (GESGAGKT). Serine 364 is subject to Phosphoserine. Positions 413-496 (SIGILDIYGF…PGLFAALNDS (84 aa)) are actin-binding. 2 consecutive IQ domains span residues 734–754 (HNMA…KDDA) and 755–780 (ARLI…YGNG). In terms of domain architecture, TH1 spans 788–978 (RRRMSMLGSR…TVTVRQGLPG (191 aa)). 2 disordered regions span residues 963 to 1162 (DSYK…TYKA) and 1214 to 1304 (ECDP…DDDW). 2 stretches are compositionally biased toward polar residues: residues 964–983 (SYKS…SQNP) and 1001–1012 (RGSNMRSTSSYQ). Low complexity-rich tracts occupy residues 1029–1052 (QPPV…PQAQ), 1072–1096 (QPHA…PQAQ), and 1120–1140 (PSAP…KKNV). Pro residues predominate over residues 1141–1156 (APPPPPAAASPPPKPK). In terms of domain architecture, SH3 spans 1155–1217 (PKFPTYKAAY…PAAYVVECDP (63 aa)). 2 stretches are compositionally biased toward low complexity: residues 1217 to 1227 (PPANSPAGNAK) and 1236 to 1256 (LNSA…NGAG). The segment covering 1292–1304 (DSDEEDEEDDDDW) has biased composition (acidic residues).

This sequence belongs to the TRAFAC class myosin-kinesin ATPase superfamily. Myosin family. In terms of processing, phosphorylation of the TEDS site (Ser-364) is required for the polarization of the actin cytoskeleton. Phosphorylation probably activates the myosin-I ATPase activity.

The protein localises to the cytoplasm. It is found in the cytoskeleton. It localises to the actin patch. In terms of biological role, type-I myosin implicated in the organization of the actin cytoskeleton. Required for proper actin cytoskeleton polarization. At the cell cortex, assembles in patch-like structures together with proteins from the actin-polymerizing machinery and promotes actin assembly. Functions as actin nucleation-promoting factor (NPF) for the Arp2/3 complex. The sequence is that of Myosin-1 (MYO1) from Debaryomyces hansenii (strain ATCC 36239 / CBS 767 / BCRC 21394 / JCM 1990 / NBRC 0083 / IGC 2968) (Yeast).